Reading from the N-terminus, the 248-residue chain is 2,3-bisphosphoglycerate-dependent phosphoglycerate mutase (248 aa).

Substrate contacts are provided by residues 8–15 (RHGESIWN), 21–22 (TG), R60, 87–90 (EKHY), K98, 114–115 (RR), and 183–184 (GN). H9 functions as the Tele-phosphohistidine intermediate in the catalytic mechanism. The active-site Proton donor/acceptor is the E87.

Belongs to the phosphoglycerate mutase family. BPG-dependent PGAM subfamily.

It catalyses the reaction (2R)-2-phosphoglycerate = (2R)-3-phosphoglycerate. The protein operates within carbohydrate degradation; glycolysis; pyruvate from D-glyceraldehyde 3-phosphate: step 3/5. Its function is as follows. Catalyzes the interconversion of 2-phosphoglycerate and 3-phosphoglycerate. The polypeptide is 2,3-bisphosphoglycerate-dependent phosphoglycerate mutase (Parabacteroides distasonis (strain ATCC 8503 / DSM 20701 / CIP 104284 / JCM 5825 / NCTC 11152)).